The chain runs to 225 residues: Sugar fermentation stimulation protein homolog (225 aa).

The protein belongs to the SfsA family.

The sequence is that of Sugar fermentation stimulation protein homolog from Sulfolobus acidocaldarius (strain ATCC 33909 / DSM 639 / JCM 8929 / NBRC 15157 / NCIMB 11770).